The primary structure comprises 208 residues: GTP cyclohydrolase-2 (208 aa).

Position 49-53 (49-53) interacts with GTP; sequence RLHSE. Zn(2+) is bound by residues C54, C65, and C67. Residues Q70, 92–94, and T114 contribute to the GTP site; that span reads EGR. D126 (proton acceptor) is an active-site residue. R128 (nucleophile) is an active-site residue. Positions 149 and 154 each coordinate GTP.

It belongs to the GTP cyclohydrolase II family. Requires Zn(2+) as cofactor.

It carries out the reaction GTP + 4 H2O = 2,5-diamino-6-hydroxy-4-(5-phosphoribosylamino)-pyrimidine + formate + 2 phosphate + 3 H(+). The protein operates within cofactor biosynthesis; riboflavin biosynthesis; 5-amino-6-(D-ribitylamino)uracil from GTP: step 1/4. In terms of biological role, catalyzes the conversion of GTP to 2,5-diamino-6-ribosylamino-4(3H)-pyrimidinone 5'-phosphate (DARP), formate and pyrophosphate. This is GTP cyclohydrolase-2 from Azotobacter vinelandii (strain DJ / ATCC BAA-1303).